The chain runs to 448 residues: Glutamyl-tRNA reductase (448 aa).

Substrate contacts are provided by residues 49–52 (TCNR), Ser-109, 114–116 (ETQ), and Gln-120. The Nucleophile role is filled by Cys-50. Residue 189-194 (GAGEMG) coordinates NADP(+).

The protein belongs to the glutamyl-tRNA reductase family. Homodimer.

The enzyme catalyses (S)-4-amino-5-oxopentanoate + tRNA(Glu) + NADP(+) = L-glutamyl-tRNA(Glu) + NADPH + H(+). It functions in the pathway porphyrin-containing compound metabolism; protoporphyrin-IX biosynthesis; 5-aminolevulinate from L-glutamyl-tRNA(Glu): step 1/2. Functionally, catalyzes the NADPH-dependent reduction of glutamyl-tRNA(Glu) to glutamate 1-semialdehyde (GSA). The polypeptide is Glutamyl-tRNA reductase (Staphylococcus epidermidis (strain ATCC 35984 / DSM 28319 / BCRC 17069 / CCUG 31568 / BM 3577 / RP62A)).